A 249-amino-acid polypeptide reads, in one-letter code: uncharacterized protein (249 aa).

The protein resides in the cytoplasm. The protein localises to the nucleus. It is found in the nucleolus. This is an uncharacterized protein from Schizosaccharomyces pombe (strain 972 / ATCC 24843) (Fission yeast).